Consider the following 436-residue polypeptide: p-aminobenzoyl-glutamate hydrolase subunit A (436 aa).

The protein belongs to the peptidase M20 family. In terms of assembly, forms a heterodimer with AbgB. Requires Mn(2+) as cofactor.

Functionally, component of the p-aminobenzoyl-glutamate hydrolase multicomponent enzyme system which catalyzes the cleavage of p-aminobenzoyl-glutamate (PABA-GLU) to form p-aminobenzoate (PABA) and glutamate. AbgAB does not degrade dipeptides and the physiological role of abgABT should be clarified. The polypeptide is p-aminobenzoyl-glutamate hydrolase subunit A (abgA) (Escherichia coli (strain K12)).